Reading from the N-terminus, the 127-residue chain is Small ribosomal subunit protein uS13 (127 aa).

Positions 96 to 127 are disordered; that stretch reads LPCHGQRTSTNARTRKGPKRTAVKKKGAAKKK. A compositionally biased stretch (basic residues) spans 108–127; sequence RTRKGPKRTAVKKKGAAKKK.

It belongs to the universal ribosomal protein uS13 family. In terms of assembly, part of the 30S ribosomal subunit. Forms a loose heterodimer with protein S19. Forms two bridges to the 50S subunit in the 70S ribosome.

In terms of biological role, located at the top of the head of the 30S subunit, it contacts several helices of the 16S rRNA. In the 70S ribosome it contacts the 23S rRNA (bridge B1a) and protein L5 of the 50S subunit (bridge B1b), connecting the 2 subunits; these bridges are implicated in subunit movement. Contacts the tRNAs in the A and P-sites. The sequence is that of Small ribosomal subunit protein uS13 from Desulfosudis oleivorans (strain DSM 6200 / JCM 39069 / Hxd3) (Desulfococcus oleovorans).